Consider the following 894-residue polypeptide: Valine--tRNA ligase (894 aa).

The span at 1–22 (MKSIQTPSKSHTNTKETPVMSQ) shows a compositional bias: polar residues. Residues 1–28 (MKSIQTPSKSHTNTKETPVMSQEETKGY) are disordered. The short motif at 69-79 (PNVTGSLHIGH) is the 'HIGH' region element. Positions 554–558 (KMSKS) match the 'KMSKS' region motif. Residue Lys557 coordinates ATP. Residues 832–894 (IISRLEKQQE…VKVELQGIKG (63 aa)) are a coiled coil.

Belongs to the class-I aminoacyl-tRNA synthetase family. ValS type 1 subfamily. Monomer.

It localises to the cytoplasm. The enzyme catalyses tRNA(Val) + L-valine + ATP = L-valyl-tRNA(Val) + AMP + diphosphate. In terms of biological role, catalyzes the attachment of valine to tRNA(Val). As ValRS can inadvertently accommodate and process structurally similar amino acids such as threonine, to avoid such errors, it has a 'posttransfer' editing activity that hydrolyzes mischarged Thr-tRNA(Val) in a tRNA-dependent manner. The polypeptide is Valine--tRNA ligase (Wolinella succinogenes (strain ATCC 29543 / DSM 1740 / CCUG 13145 / JCM 31913 / LMG 7466 / NCTC 11488 / FDC 602W) (Vibrio succinogenes)).